A 97-amino-acid polypeptide reads, in one-letter code: Aspartyl/glutamyl-tRNA(Asn/Gln) amidotransferase subunit C (97 aa).

The segment at 68 to 97 (ETGFTQEEALSNAPQQSQGQFRTPKVVESA) is disordered. Residues 70-88 (GFTQEEALSNAPQQSQGQF) are compositionally biased toward polar residues.

It belongs to the GatC family. In terms of assembly, heterotrimer of A, B and C subunits.

The catalysed reaction is L-glutamyl-tRNA(Gln) + L-glutamine + ATP + H2O = L-glutaminyl-tRNA(Gln) + L-glutamate + ADP + phosphate + H(+). The enzyme catalyses L-aspartyl-tRNA(Asn) + L-glutamine + ATP + H2O = L-asparaginyl-tRNA(Asn) + L-glutamate + ADP + phosphate + 2 H(+). Its function is as follows. Allows the formation of correctly charged Asn-tRNA(Asn) or Gln-tRNA(Gln) through the transamidation of misacylated Asp-tRNA(Asn) or Glu-tRNA(Gln) in organisms which lack either or both of asparaginyl-tRNA or glutaminyl-tRNA synthetases. The reaction takes place in the presence of glutamine and ATP through an activated phospho-Asp-tRNA(Asn) or phospho-Glu-tRNA(Gln). The sequence is that of Aspartyl/glutamyl-tRNA(Asn/Gln) amidotransferase subunit C from Akkermansia muciniphila (strain ATCC BAA-835 / DSM 22959 / JCM 33894 / BCRC 81048 / CCUG 64013 / CIP 107961 / Muc).